A 388-amino-acid polypeptide reads, in one-letter code: Succinate--CoA ligase [ADP-forming] subunit beta (388 aa).

An ATP-grasp domain is found at 9 to 245 (KELLKSYGLP…KSQENERELK (237 aa)). Residues Lys46, 53–55 (GRG), Glu100, Tyr103, and Glu108 contribute to the ATP site. Residues Asn200 and Asp214 each coordinate Mg(2+). Residues Asn265 and 322 to 324 (GIV) each bind substrate.

Belongs to the succinate/malate CoA ligase beta subunit family. Heterotetramer of two alpha and two beta subunits. Mg(2+) serves as cofactor.

The enzyme catalyses succinate + ATP + CoA = succinyl-CoA + ADP + phosphate. The catalysed reaction is GTP + succinate + CoA = succinyl-CoA + GDP + phosphate. The protein operates within carbohydrate metabolism; tricarboxylic acid cycle; succinate from succinyl-CoA (ligase route): step 1/1. Its function is as follows. Succinyl-CoA synthetase functions in the citric acid cycle (TCA), coupling the hydrolysis of succinyl-CoA to the synthesis of either ATP or GTP and thus represents the only step of substrate-level phosphorylation in the TCA. The beta subunit provides nucleotide specificity of the enzyme and binds the substrate succinate, while the binding sites for coenzyme A and phosphate are found in the alpha subunit. The protein is Succinate--CoA ligase [ADP-forming] subunit beta of Psychrobacter arcticus (strain DSM 17307 / VKM B-2377 / 273-4).